The primary structure comprises 459 residues: ERBB receptor feedback inhibitor 1 (459 aa).

N-acetylserine is present on Ser-2. A phosphothreonine mark is found at Thr-126 and Thr-130. The interval 227-352 (QNRVVPDPNP…VMPPTQSFAP (126 aa)) is disordered. Phosphoserine occurs at positions 250 and 271. Positions 264 to 273 (SSCTHRASPS) are enriched in polar residues. Residues 282–291 (PPRVPIPPRP) show a composition bias toward pro residues. Ser-300 carries the post-translational modification Phosphoserine. Basic and acidic residues predominate over residues 310-323 (DEDRPPKVPPREPL). A compositionally biased stretch (polar residues) spans 324 to 335 (SRSNSRTPSPKS). Positions 332–361 (SPKSLPSYLNGVMPPTQSFAPDPKYVSSKA) are interaction with EGFR and ERBB2 and regulation of EGFR activation. Ser-458 carries the post-translational modification Phosphoserine.

It belongs to the MIG6 family. In terms of assembly, interacts with EGFR and ERBB2.

Its subcellular location is the cytoplasm. The protein localises to the cell membrane. It localises to the nucleus. Functionally, negative regulator of EGFR signaling in skin morphogenesis. Acts as a negative regulator for several EGFR family members, including ERBB2, ERBB3 and ERBB4. Inhibits EGFR catalytic activity by interfering with its dimerization. Inhibits autophosphorylation of EGFR, ERBB2 and ERBB4. Important for normal keratinocyte proliferation and differentiation. Plays a role in modulating the response to steroid hormones in the uterus. Required for normal response to progesterone in the uterus and for fertility. Mediates epithelial estrogen responses in the uterus by regulating ESR1 levels and activation. Important for regulation of endometrium cell proliferation. Important for normal prenatal and perinatal lung development. In Rattus norvegicus (Rat), this protein is ERBB receptor feedback inhibitor 1 (Errfi1).